We begin with the raw amino-acid sequence, 119 residues long: Ribosome-binding factor A (119 aa).

Belongs to the RbfA family. In terms of assembly, monomer. Binds 30S ribosomal subunits, but not 50S ribosomal subunits or 70S ribosomes.

It is found in the cytoplasm. Functionally, one of several proteins that assist in the late maturation steps of the functional core of the 30S ribosomal subunit. Associates with free 30S ribosomal subunits (but not with 30S subunits that are part of 70S ribosomes or polysomes). Required for efficient processing of 16S rRNA. May interact with the 5'-terminal helix region of 16S rRNA. This is Ribosome-binding factor A from Citrifermentans bemidjiense (strain ATCC BAA-1014 / DSM 16622 / JCM 12645 / Bem) (Geobacter bemidjiensis).